We begin with the raw amino-acid sequence, 344 residues long: Aspartate-semialdehyde dehydrogenase (344 aa).

Residues 10–13 and 38–39 contribute to the NADP(+) site; these read TGQV and RS. Arg-101 lines the phosphate pocket. The active-site Acyl-thioester intermediate is Cys-131. Substrate is bound at residue Gln-158. 161–162 contacts NADP(+); it reads SG. Lys-228 contacts phosphate. Arg-250 lines the substrate pocket. His-257 serves as the catalytic Proton acceptor. An NADP(+)-binding site is contributed by Asn-326.

Belongs to the aspartate-semialdehyde dehydrogenase family. As to quaternary structure, homodimer.

It carries out the reaction L-aspartate 4-semialdehyde + phosphate + NADP(+) = 4-phospho-L-aspartate + NADPH + H(+). The protein operates within amino-acid biosynthesis; L-lysine biosynthesis via DAP pathway; (S)-tetrahydrodipicolinate from L-aspartate: step 2/4. It participates in amino-acid biosynthesis; L-methionine biosynthesis via de novo pathway; L-homoserine from L-aspartate: step 2/3. It functions in the pathway amino-acid biosynthesis; L-threonine biosynthesis; L-threonine from L-aspartate: step 2/5. Catalyzes the NADPH-dependent formation of L-aspartate-semialdehyde (L-ASA) by the reductive dephosphorylation of L-aspartyl-4-phosphate. The protein is Aspartate-semialdehyde dehydrogenase of Corynebacterium melassecola.